Reading from the N-terminus, the 606-residue chain is MPKRELWPAGLCSEPVTHIGSCGDMMSTTSTRSGSSDSSYDFLSAEEKECLLFLEKTIGSLEAEADSGLSTDESEPATSPRSFRALPTATQQAPQGKPEATDIQQVPVPKRVAQPSCPPESHSLGLRAGSYSLPRNLHLGRSQNLRESATQANSPVSEASEVFLEEPEKGQTSQGAKAKTIQPPAPSQKGTLDLSTVLIPPPEAFQDIRPKESGEESPPKKPGEQTHTPQVHSLERSPHSQKKVEMSSETVSHKATEKGWTEGLQQPQQPPAQSSQPTKAEELSLPSGVKPSIQQTPLTASKARKLPPNIVLKSSRSSFHSHPQNWLSNHTEATDSGPVSSLQEQRKARREALEKLGLPQDQDDPSLLVNKHTSTLKVREAQPQTPSQARAPARPASPALVSGTASAAGKVSPKKAVAPMDSLSKGWIPTQETPPGKVAEAKSMPIPIPKTLKENSSRTQPKPDPRLTLQESSIPGLRQMNFKSNTLERSGVGLSSYLSAAEKKDPSCQTSTSLGKSPFLDKVSPSAFRNSRPRPASLGMGKDFAGIQGGKLVGLEQDQCSQQPSFKGQSYDKLPRPPCISVKISPKGIPDGHRREALKKLGLLKE.

Disordered stretches follow at residues 64 to 488 (EADS…NTLE), 500 to 543 (AAEK…MGKD), and 555 to 574 (LEQD…YDKL). Polar residues predominate over residues 68-81 (GLSTDESEPATSPR). 2 positions are modified to phosphoserine: S130 and S132. The segment covering 141–157 (RSQNLRESATQANSPVS) has biased composition (polar residues). Basic and acidic residues-rich tracts occupy residues 206-224 (QDIR…KPGE) and 233-260 (SLER…EKGW). Over residues 265 to 277 (QQPQQPPAQSSQP) the composition is skewed to low complexity. Residues 312 to 331 (LKSSRSSFHSHPQNWLSNHT) show a composition bias toward polar residues. T334 bears the Phosphothreonine mark. Positions 344-354 (EQRKARREALE) are enriched in basic and acidic residues. Low complexity predominate over residues 381 to 399 (AQPQTPSQARAPARPASPA). 2 positions are modified to phosphoserine: S397 and S412. Positions 451 to 465 (TLKENSSRTQPKPDP) are enriched in basic and acidic residues. S524 carries the phosphoserine modification. Residues 558–568 (DQCSQQPSFKG) show a composition bias toward polar residues.

This sequence belongs to the SARG family.

It localises to the cytoplasm. Its function is as follows. Putative androgen-specific receptor. The sequence is that of Specifically androgen-regulated gene protein (Sarg) from Mus musculus (Mouse).